The sequence spans 354 residues: Guanine nucleotide-binding protein G(o) subunit alpha (354 aa).

Residue glycine 2 is the site of N-myristoyl glycine attachment. The S-palmitoyl cysteine moiety is linked to residue cysteine 3. Residues 32-354 (KDVKLLLLGA…ANNLRGCGLY (323 aa)) enclose the G-alpha domain. The tract at residues 35–48 (KLLLLGAGESGKST) is G1 motif. 9 residues coordinate GTP: glutamate 43, lysine 46, serine 47, threonine 48, serine 152, leucine 176, arginine 177, threonine 178, and arginine 179. Position 47 (serine 47) interacts with Mg(2+). The interval 174–182 (DILRTRVKT) is G2 motif. Threonine 182 is a binding site for Mg(2+). Positions 197 to 206 (FRLFDVGGQR) are G3 motif. The residue at position 205 (glutamine 205) is a 5-glutamyl histamine. Residues 266-273 (ILFLNKKD) form a G4 motif region. GTP contacts are provided by asparagine 270, aspartate 273, and cysteine 325. The G5 motif stretch occupies residues 324–329 (TCATDT). Cysteine 351 carries S-palmitoyl cysteine lipidation.

This sequence belongs to the G-alpha family. G(i/o/t/z) subfamily. In terms of assembly, g proteins are composed of 3 units; alpha, beta and gamma. The alpha chain contains the guanine nucleotide binding site. Forms a complex with GNB1 and GNG3. Interacts with RGS14. Interacts with RGS16. Interacts with RGS19. Interacts (when palmitoylated) with ADGRG3. Histaminylated at Gln-205 residues by TGM2.

The protein resides in the cell membrane. It is found in the membrane. It catalyses the reaction GTP + H2O = GDP + phosphate + H(+). With respect to regulation, the GTPase activity is promoted by GTPAse activators, such as RGS14, RGS16 and RGS19. In terms of biological role, guanine nucleotide-binding proteins (G proteins) function as transducers downstream of G protein-coupled receptors (GPCRs) in numerous signaling cascades. The alpha chain contains the guanine nucleotide binding site and alternates between an active, GTP-bound state and an inactive, GDP-bound state. Signaling by an activated GPCR promotes GDP release and GTP binding. The alpha subunit has a low GTPase activity that converts bound GTP to GDP, thereby terminating the signal. Both GDP release and GTP hydrolysis are modulated by numerous regulatory proteins. Signaling is mediated via effector proteins, such as adenylate cyclase. Inhibits adenylate cyclase activity, leading to decreased intracellular cAMP levels. The polypeptide is Guanine nucleotide-binding protein G(o) subunit alpha (Gnao1) (Mus musculus (Mouse)).